The sequence spans 622 residues: uncharacterized protein (622 aa).

Over residues leucine 157 to glutamine 166 the composition is skewed to basic and acidic residues. Positions leucine 157–glutamate 238 are disordered.

This is an uncharacterized protein from Homo sapiens (Human).